Here is a 122-residue protein sequence, read N- to C-terminus: Glycine cleavage system H protein (122 aa).

One can recognise a Lipoyl-binding domain in the interval 22-103; sequence IGIIGISDYA…AFGSWFFKVE (82 aa). At Lys63 the chain carries N6-lipoyllysine.

It belongs to the GcvH family. The glycine cleavage system is composed of four proteins: P, T, L and H. (R)-lipoate is required as a cofactor.

Functionally, the glycine cleavage system catalyzes the degradation of glycine. The H protein shuttles the methylamine group of glycine from the P protein to the T protein. In Treponema denticola (strain ATCC 35405 / DSM 14222 / CIP 103919 / JCM 8153 / KCTC 15104), this protein is Glycine cleavage system H protein.